Here is a 500-residue protein sequence, read N- to C-terminus: Abscisic acid 8'-hydroxylase 3 (500 aa).

The chain crosses the membrane as a helical span at residues alanine 3–valine 23. Cysteine 426 contributes to the heme binding site.

It belongs to the cytochrome P450 family. Heme serves as cofactor.

The protein localises to the membrane. It catalyses the reaction 2-cis-(+)-abscisate + reduced [NADPH--hemoprotein reductase] + O2 = (+)-8'-hydroxyabscisate + oxidized [NADPH--hemoprotein reductase] + H2O + H(+). It functions in the pathway plant hormone degradation; abscisic acid degradation. Functionally, involved in the oxidative degradation of abscisic acid. This is Abscisic acid 8'-hydroxylase 3 (CYP707A7) from Oryza sativa subsp. indica (Rice).